The chain runs to 358 residues: Carbamoyl phosphate synthase small chain (358 aa).

The interval 1–172 (MKAALALEDG…EAKRFESDGD (172 aa)) is CPSase. Positions 45, 222, and 224 each coordinate L-glutamine. A Glutamine amidotransferase type-1 domain is found at 174–358 (EVVLVDCGVK…RYVDMLREYR (185 aa)). Cys-249 serves as the catalytic Nucleophile. Residues Leu-250, Gln-253, Asn-291, and Phe-294 each coordinate L-glutamine. Active-site residues include His-333 and Glu-335.

Belongs to the CarA family. As to quaternary structure, composed of two chains; the small (or glutamine) chain promotes the hydrolysis of glutamine to ammonia, which is used by the large (or ammonia) chain to synthesize carbamoyl phosphate. Tetramer of heterodimers (alpha,beta)4.

It carries out the reaction hydrogencarbonate + L-glutamine + 2 ATP + H2O = carbamoyl phosphate + L-glutamate + 2 ADP + phosphate + 2 H(+). The enzyme catalyses L-glutamine + H2O = L-glutamate + NH4(+). Its pathway is amino-acid biosynthesis; L-arginine biosynthesis; carbamoyl phosphate from bicarbonate: step 1/1. It participates in pyrimidine metabolism; UMP biosynthesis via de novo pathway; (S)-dihydroorotate from bicarbonate: step 1/3. Functionally, small subunit of the glutamine-dependent carbamoyl phosphate synthetase (CPSase). CPSase catalyzes the formation of carbamoyl phosphate from the ammonia moiety of glutamine, carbonate, and phosphate donated by ATP, constituting the first step of 2 biosynthetic pathways, one leading to arginine and/or urea and the other to pyrimidine nucleotides. The small subunit (glutamine amidotransferase) binds and cleaves glutamine to supply the large subunit with the substrate ammonia. In Archaeoglobus fulgidus (strain ATCC 49558 / DSM 4304 / JCM 9628 / NBRC 100126 / VC-16), this protein is Carbamoyl phosphate synthase small chain.